A 286-amino-acid chain; its full sequence is Bifunctional protein FolD (286 aa).

NADP(+) is bound by residues 164 to 166 (GRS), Ser193, and Ile234.

Belongs to the tetrahydrofolate dehydrogenase/cyclohydrolase family. Homodimer.

It catalyses the reaction (6R)-5,10-methylene-5,6,7,8-tetrahydrofolate + NADP(+) = (6R)-5,10-methenyltetrahydrofolate + NADPH. It carries out the reaction (6R)-5,10-methenyltetrahydrofolate + H2O = (6R)-10-formyltetrahydrofolate + H(+). The protein operates within one-carbon metabolism; tetrahydrofolate interconversion. In terms of biological role, catalyzes the oxidation of 5,10-methylenetetrahydrofolate to 5,10-methenyltetrahydrofolate and then the hydrolysis of 5,10-methenyltetrahydrofolate to 10-formyltetrahydrofolate. This Nitratidesulfovibrio vulgaris (strain ATCC 29579 / DSM 644 / CCUG 34227 / NCIMB 8303 / VKM B-1760 / Hildenborough) (Desulfovibrio vulgaris) protein is Bifunctional protein FolD.